Consider the following 164-residue polypeptide: Endoribonuclease YbeY (164 aa).

His125, His129, and His135 together coordinate Zn(2+).

It belongs to the endoribonuclease YbeY family. Zn(2+) is required as a cofactor.

It localises to the cytoplasm. Its function is as follows. Single strand-specific metallo-endoribonuclease involved in late-stage 70S ribosome quality control and in maturation of the 3' terminus of the 16S rRNA. The protein is Endoribonuclease YbeY of Paramagnetospirillum magneticum (strain ATCC 700264 / AMB-1) (Magnetospirillum magneticum).